A 433-amino-acid chain; its full sequence is Protein translocase subunit SecY (433 aa).

10 helical membrane passes run 17-37 (IIFTIFVLIICRFGSFIPIAG), 71-91 (IFALAIMPYITASIIIQLMSV), 117-137 (LTVLLASLQAYGVAVSLESIV), 141-161 (GPVVIIPGLFFKITTVITLVV), 184-204 (LIIFIGIISGVPSAIISMFEL), 212-232 (PLVAIAVCAGVVILISIIIFF), 268-288 (GVIPPIFASSILLFPATLANF), 309-329 (IYILLYVALIMFFSFFYTAIV), 366-386 (LTVVGGIYLSVICIIPELLMN), and 388-408 (YVISLSLGGTSFLIVVNVVLD).

Belongs to the SecY/SEC61-alpha family. As to quaternary structure, component of the Sec protein translocase complex. Heterotrimer consisting of SecY, SecE and SecG subunits. The heterotrimers can form oligomers, although 1 heterotrimer is thought to be able to translocate proteins. Interacts with the ribosome. Interacts with SecDF, and other proteins may be involved. Interacts with SecA.

It is found in the cell inner membrane. Functionally, the central subunit of the protein translocation channel SecYEG. Consists of two halves formed by TMs 1-5 and 6-10. These two domains form a lateral gate at the front which open onto the bilayer between TMs 2 and 7, and are clamped together by SecE at the back. The channel is closed by both a pore ring composed of hydrophobic SecY resides and a short helix (helix 2A) on the extracellular side of the membrane which forms a plug. The plug probably moves laterally to allow the channel to open. The ring and the pore may move independently. The polypeptide is Protein translocase subunit SecY (Rickettsia bellii (strain RML369-C)).